The chain runs to 506 residues: Bifunctional purine biosynthesis protein PurH (506 aa).

In terms of domain architecture, MGS-like spans 1-146; that stretch reads MARLALLSVS…KNFAHLTVLC (146 aa).

Belongs to the PurH family.

The catalysed reaction is (6R)-10-formyltetrahydrofolate + 5-amino-1-(5-phospho-beta-D-ribosyl)imidazole-4-carboxamide = 5-formamido-1-(5-phospho-D-ribosyl)imidazole-4-carboxamide + (6S)-5,6,7,8-tetrahydrofolate. It carries out the reaction IMP + H2O = 5-formamido-1-(5-phospho-D-ribosyl)imidazole-4-carboxamide. The protein operates within purine metabolism; IMP biosynthesis via de novo pathway; 5-formamido-1-(5-phospho-D-ribosyl)imidazole-4-carboxamide from 5-amino-1-(5-phospho-D-ribosyl)imidazole-4-carboxamide (10-formyl THF route): step 1/1. It participates in purine metabolism; IMP biosynthesis via de novo pathway; IMP from 5-formamido-1-(5-phospho-D-ribosyl)imidazole-4-carboxamide: step 1/1. The polypeptide is Bifunctional purine biosynthesis protein PurH (Nostoc sp. (strain PCC 7120 / SAG 25.82 / UTEX 2576)).